The primary structure comprises 464 residues: MPDAKKQGRSNKAMTFFVCFLAALAGLLFGLDIGVIAGALPFIADEFQITSHTQEWVVSSMMFGAAVGAVGSGWLSFKLGRKKSLMIGAILFVAGSLFSAAAPNVEVLILSRVLLGLAVGVASYTAPLYLSEIAPEKIRGSMISMYQLMITIGILGAYLSDTAFSYTGAWRWMLGVIIIPAILLLIGVFFLPDSPRWFAAKRRFVDAERVLLRLRDTSAEAKRELDEIRESLQVKQSGWALFKENSNFRRAVFLGVLLQVMQQFTGMNVIMYYAPKIFELAGYTNTTEQMWGTVIVGLTNVLATFIAIGLVDRWGRKPTLTLGFLVMAAGMGVLGTMMHIGIHSPSAQYFAIAMLLMFIVGFAMSAGPLIWVLCSEIQPLKGRDFGITCSTATNWIANMIVGATFLTMLNTLGNANTFWVYAALNVLFILLTLWLVPETKHVSLEHIERNLMKGRKLREIGAHD.

The Cytoplasmic portion of the chain corresponds to Met-1 to Thr-15. A helical membrane pass occupies residues Phe-16 to Ile-36. Topologically, residues Ala-37–Trp-56 are periplasmic. Residues Val-57–Phe-77 traverse the membrane as a helical segment. Topologically, residues Lys-78–Ser-84 are cytoplasmic. The helical transmembrane segment at Leu-85 to Val-105 threads the bilayer. The Periplasmic segment spans residues Glu-106–Arg-112. The chain crosses the membrane as a helical span at residues Val-113 to Ile-133. The Cytoplasmic segment spans residues Ala-134 to Arg-139. The helical transmembrane segment at Gly-140–Ser-160 threads the bilayer. Residues Asp-161–Arg-171 are Periplasmic-facing. A helical transmembrane segment spans residues Trp-172–Pro-192. The Cytoplasmic segment spans residues Asp-193–Arg-250. Residues Ala-251–Met-271 form a helical membrane-spanning segment. Residues Tyr-272 to Met-290 lie on the Periplasmic side of the membrane. The helical transmembrane segment at Trp-291–Val-311 threads the bilayer. Residues Asp-312 to Thr-321 lie on the Cytoplasmic side of the membrane. A helical membrane pass occupies residues Leu-322–Ile-342. At His-343 to Ala-351 the chain is on the periplasmic side. A helical membrane pass occupies residues Ile-352 to Val-372. Residues Leu-373–Asn-394 lie on the Cytoplasmic side of the membrane. A helical membrane pass occupies residues Trp-395 to Ala-415. Asn-416 is a topological domain (periplasmic). A helical transmembrane segment spans residues Thr-417–Pro-437. Residues Glu-438 to Asp-464 are Cytoplasmic-facing.

Belongs to the major facilitator superfamily. Sugar transporter (TC 2.A.1.1) family.

The protein localises to the cell inner membrane. Uptake of galactose across the boundary membrane with the concomitant transport of protons into the cell (symport system). This is Galactose-proton symporter (galP) from Escherichia coli O6:H1 (strain CFT073 / ATCC 700928 / UPEC).